A 122-amino-acid polypeptide reads, in one-letter code: Large ribosomal subunit protein uL14 (122 aa).

Belongs to the universal ribosomal protein uL14 family. In terms of assembly, part of the 50S ribosomal subunit. Forms a cluster with proteins L3 and L19. In the 70S ribosome, L14 and L19 interact and together make contacts with the 16S rRNA in bridges B5 and B8.

Binds to 23S rRNA. Forms part of two intersubunit bridges in the 70S ribosome. This Parafrankia sp. (strain EAN1pec) protein is Large ribosomal subunit protein uL14.